The following is a 126-amino-acid chain: Aspartate 1-decarboxylase (126 aa).

Serine 25 acts as the Schiff-base intermediate with substrate; via pyruvic acid in catalysis. Position 25 is a pyruvic acid (Ser) (serine 25). Residue threonine 57 participates in substrate binding. The active-site Proton donor is the tyrosine 58. Substrate is bound at residue 73 to 75 (GAA).

It belongs to the PanD family. Heterooctamer of four alpha and four beta subunits. It depends on pyruvate as a cofactor. In terms of processing, is synthesized initially as an inactive proenzyme, which is activated by self-cleavage at a specific serine bond to produce a beta-subunit with a hydroxyl group at its C-terminus and an alpha-subunit with a pyruvoyl group at its N-terminus.

The protein localises to the cytoplasm. The enzyme catalyses L-aspartate + H(+) = beta-alanine + CO2. It participates in cofactor biosynthesis; (R)-pantothenate biosynthesis; beta-alanine from L-aspartate: step 1/1. In terms of biological role, catalyzes the pyruvoyl-dependent decarboxylation of aspartate to produce beta-alanine. The sequence is that of Aspartate 1-decarboxylase from Erwinia tasmaniensis (strain DSM 17950 / CFBP 7177 / CIP 109463 / NCPPB 4357 / Et1/99).